A 398-amino-acid polypeptide reads, in one-letter code: Cytohesin-1 (398 aa).

At M1 the chain carries N-acetylmethionine. Residues 1–60 (MEDDDSYVPSDLTAEERQELENIRRRKQELLADIQRLKEEIAEVANEIESLGSTEERKNM) are necessary for localization at adherens junction. Residues 10-67 (SDLTAEERQELENIRRRKQELLADIQRLKEEIAEVANEIESLGSTEERKNMQRNKQVA) are a coiled coil. Residues 73–202 (FNMDPKKGIQ…IIMLNTSLHN (130 aa)) enclose the SEC7 domain. The PH domain occupies 260–377 (NPDREGWLLK…WIKCIKAAIS (118 aa)). A 1,2-diacyl-sn-glycero-3-phospho-(1D-myo-inositol-3,4,5-trisphosphate) contacts are provided by residues 269-277 (KLGGGRVKT), R281, Y292, R302, and N351. The C-terminal autoinhibitory region stretch occupies residues 388–396 (RKKKVSSTK).

In terms of assembly, interacts with TRIM23 and CYTIP. Interacts (via coiled-coil domain) with FRMD4A (via coiled-coil domain). Interacts with FRMD4B. Found in a complex with PARD3, CYTH1 and FRMD4A. Interacts (via N-terminal domain) with INAVA (via N-terminal domain). In terms of processing, ubiquitinated by SCF(FBXW11) E3 ubiquitin-protein ligase complex. Ubiquitination induces proteasomal degradation. Expressed in colon and small intestine (at protein level).

It is found in the cell membrane. The protein localises to the cytoplasm. The protein resides in the cytosol. It localises to the cell junction. Its subcellular location is the tight junction. It is found in the adherens junction. Its function is as follows. Promotes guanine-nucleotide exchange on ARF1, ARF5 and ARF6. Promotes the activation of ARF factors through replacement of GDP with GTP. Plays an important role in membrane trafficking, during junctional remodeling and epithelial polarization, through regulation of ARF6 activity. The sequence is that of Cytohesin-1 (Cyth1) from Mus musculus (Mouse).